The following is a 257-amino-acid chain: Imidazole glycerol phosphate synthase subunit HisF (257 aa).

Active-site residues include aspartate 11 and aspartate 130.

The protein belongs to the HisA/HisF family. Heterodimer of HisH and HisF.

It localises to the cytoplasm. It catalyses the reaction 5-[(5-phospho-1-deoxy-D-ribulos-1-ylimino)methylamino]-1-(5-phospho-beta-D-ribosyl)imidazole-4-carboxamide + L-glutamine = D-erythro-1-(imidazol-4-yl)glycerol 3-phosphate + 5-amino-1-(5-phospho-beta-D-ribosyl)imidazole-4-carboxamide + L-glutamate + H(+). Its pathway is amino-acid biosynthesis; L-histidine biosynthesis; L-histidine from 5-phospho-alpha-D-ribose 1-diphosphate: step 5/9. In terms of biological role, IGPS catalyzes the conversion of PRFAR and glutamine to IGP, AICAR and glutamate. The HisF subunit catalyzes the cyclization activity that produces IGP and AICAR from PRFAR using the ammonia provided by the HisH subunit. The protein is Imidazole glycerol phosphate synthase subunit HisF of Shewanella loihica (strain ATCC BAA-1088 / PV-4).